The sequence spans 123 residues: Small ribosomal subunit protein uS12cz/uS12cy (123 aa).

Belongs to the universal ribosomal protein uS12 family. In terms of assembly, part of the 30S ribosomal subunit.

It is found in the plastid. The protein resides in the chloroplast. In terms of biological role, with S4 and S5 plays an important role in translational accuracy. Located at the interface of the 30S and 50S subunits. The protein is Small ribosomal subunit protein uS12cz/uS12cy (rps12-A) of Drimys granadensis.